An 816-amino-acid chain; its full sequence is Endo-acting ulvan lyase (816 aa).

A signal peptide spans 1-23 (MGTSVRRISVVLMMLFGTNFCWS).

The protein belongs to the polysaccharide lyase family.

It localises to the cell surface. The protein resides in the periplasm. Functionally, ulvan lyase involved in ulvan degradation. Ulvan is the main polysaccharide component of the Ulvales (green seaweed) cell wall. It is composed of disaccharide building blocks comprising 3-sulfated rhamnose (Rha3S) linked to D-glucuronic acid (GlcA), L-iduronic acid (IduA), or D-xylose (Xyl). Ulvan lyase catalyzes the endolytic cleavage of the glycosidic bond between Rha3S and the uronic acids GlcA or IduA, producing oligosaccharides that have unsaturated 4-deoxy-L-threo-hex-4-enopyranosiduronic acid (deltaUA) at the non-reducing end. This results eventually in the degradation of the ulvan polysaccharide into deltaUA-Rha3S disaccharides and deltaUA-Rha3S-Xyl-Rha3S tetrasaccharides. In Formosa agariphila (strain DSM 15362 / KCTC 12365 / LMG 23005 / KMM 3901 / M-2Alg 35-1), this protein is Endo-acting ulvan lyase.